The primary structure comprises 394 residues: 12-oxophytodienoate reductase 7 (394 aa).

Residues 35-37 (PMT) and Q110 each bind FMN. 189 to 192 (HGAH) serves as a coordination point for substrate. The active-site Proton donor is Y194. R241 is a binding site for FMN. R286 provides a ligand contact to substrate. Residues G324 and 345–346 (GR) each bind FMN. Residues 392-394 (SRM) carry the Microbody targeting signal motif.

It belongs to the NADH:flavin oxidoreductase/NADH oxidase family. Requires FMN as cofactor.

The protein localises to the peroxisome. It catalyses the reaction (1S,2S)-OPC-8 + NADP(+) = (9S,13S,15Z)-12-oxophyto-10,15-dienoate + NADPH + H(+). It functions in the pathway lipid metabolism; oxylipin biosynthesis. Involved in the biosynthesis of jasmonate (JA) and perhaps in biosynthesis or metabolism of other oxylipin signaling moleclules. In vitro, reduces cis(+)-12-oxophytodienoic acid (cis(+)-OPDA) and cis(-)-OPDA to cis(+)-OPC-8:0 and cis(-)-OPC-8:0, respectively. May be required for the spatial and temporal regulation of JA levels during dehiscence of anthers, promoting the stomium degeneration program. Involved in carbohydrate transport underlying normal lodicule function during anthesis. This Oryza sativa subsp. japonica (Rice) protein is 12-oxophytodienoate reductase 7.